A 258-amino-acid polypeptide reads, in one-letter code: Acetylglutamate kinase (258 aa).

Substrate-binding positions include Gly41 to Gly42, Arg63, and Asn156.

Belongs to the acetylglutamate kinase family. ArgB subfamily.

The protein resides in the cytoplasm. The enzyme catalyses N-acetyl-L-glutamate + ATP = N-acetyl-L-glutamyl 5-phosphate + ADP. Its pathway is amino-acid biosynthesis; L-arginine biosynthesis; N(2)-acetyl-L-ornithine from L-glutamate: step 2/4. In terms of biological role, catalyzes the ATP-dependent phosphorylation of N-acetyl-L-glutamate. In Geobacillus thermodenitrificans (strain NG80-2), this protein is Acetylglutamate kinase.